We begin with the raw amino-acid sequence, 390 residues long: Nuclear receptor subfamily 2 group F member 6 (390 aa).

Over residues 1 to 15 the composition is skewed to gly residues; that stretch reads MAMVTGGWGGPGGDT. Residues 1-50 form a disordered region; sequence MAMVTGGWGGPGGDTNGVDKAGGSYPRATEDDSASPPGATSDAEPGDEER. Phosphoserine is present on residues serine 35 and serine 41. The segment at residues 54 to 129 is a DNA-binding region (nuclear receptor); the sequence is QVDCVVCGDK…VGMRKEAVQP (76 aa). 2 consecutive NR C4-type zinc fingers follow at residues 57 to 77 and 93 to 117; these read CVVC…CEGC and CRSN…LKKC. One can recognise an NR LBD domain in the interval 157–380; it reads PVSELIAQLL…TLIRDMLLSG (224 aa). The segment at 314-390 is important for dimerization; the sequence is LQEKAQVALT…STFNWPYGSG (77 aa).

It belongs to the nuclear hormone receptor family. NR2 subfamily. Binds DNA as dimer; homodimer and heterodimer with NR2F2 and probably NR2F1. Interacts with THRB.

Its subcellular location is the nucleus. In terms of biological role, transcription factor predominantly involved in transcriptional repression. Binds to promoter/enhancer response elements that contain the imperfect 5'-AGGTCA-3' direct or inverted repeats with various spacings which are also recognized by other nuclear hormone receptors. Involved in modulation of hormonal responses. Represses transcriptional activity of the lutropin-choriogonadotropic hormone receptor/LHCGR gene, the renin/REN gene and the oxytocin-neurophysin/OXT gene. Represses the triiodothyronine-dependent and -independent transcriptional activity of the thyroid hormone receptor gene in a cell type-specific manner. The corepressing function towards thyroid hormone receptor beta/THRB involves at least in part the inhibition of THRB binding to triiodothyronine response elements (TREs) by NR2F6. Inhibits NFATC transcription factor DNA binding and subsequently its transcriptional activity. Acts as transcriptional repressor of IL-17 expression in Th-17 differentiated CD4(+) T cells and may be involved in induction and/or maintenance of peripheral immunological tolerance and autoimmunity. Involved in development of forebrain circadian clock; is required early in the development of the locus coeruleus (LC). This chain is Nuclear receptor subfamily 2 group F member 6 (Nr2f6), found in Rattus norvegicus (Rat).